Reading from the N-terminus, the 468-residue chain is MTKTLPKDFIFGGATAAYQAEGATHTDGKGPVAWDKYLEDNYWYTAEPASDFYNRYPVDLKLSEEFGVNGIRISIAWSRIFPTGKGDVNPKGVEYYHNLFAECHKRHVEPFVTLHHFDTPEALHSDGDFLNRENIEHFVNYAEFCFKEFSEVNYWTTFNEIGPIGDGQYLVGKFPPGIQYDLAKVFQSHHNMMVSHARAVKLFKDGGYSGEIGVVHALPTKYPFDANNPDDVRAAELEDIIHNKFILDATYLGKYSDKTMEGVNHILEVNGGELDLREEDFVALDAAKDLNDFLGINYYMSDWMQAFDGETEIIHNGKGEKGSSKYQIKGVGRRKAPVDVPKTDWDWIIFPQGLYDQIMRVKADYPNYKKIYITENGLGYKDEFVDNTVYDDGRIDYVKKHLEVISDAISDGANVKGYFMWSLMDVFSWSNGYEKRYGLFYVDFETQERYPKKSAYWYKKVAETQVIE.

5 residues coordinate D-galactose 6-phosphate: Gln19, His116, Asn159, Glu160, and Asn297. Glu160 (proton donor) is an active-site residue. Residue Glu375 is the Nucleophile of the active site. D-galactose 6-phosphate is bound by residues Ser428, Trp429, Lys435, and Tyr437.

The protein belongs to the glycosyl hydrolase 1 family.

The enzyme catalyses a 6-phospho-beta-D-galactoside + H2O = D-galactose 6-phosphate + an alcohol. It functions in the pathway carbohydrate metabolism; lactose degradation; D-galactose 6-phosphate and beta-D-glucose from lactose 6-phosphate: step 1/1. The polypeptide is 6-phospho-beta-galactosidase (Streptococcus pyogenes serotype M18 (strain MGAS8232)).